Here is a 1520-residue protein sequence, read N- to C-terminus: Glutamate synthase [NADPH] large chain (1520 aa).

C22 (for GATase activity) is an active-site residue. The Glutamine amidotransferase type-2 domain maps to 22-415 (CGIGLYAHLK…PGKMLLIDLE (394 aa)). Residues 890–913 (GGKSNSGEGGEDPKRFVPDENGDD) form a disordered region. Over residues 900–913 (EDPKRFVPDENGDD) the composition is skewed to basic and acidic residues. FMN is bound at residue 1060-1112 (LAEAHQTLMLNGLRDRVVLETDGKLMTGRDVVMAALLGAEEFGFATAPLVVLG). Residues C1113, C1119, and C1124 each coordinate [3Fe-4S] cluster.

The protein belongs to the glutamate synthase family. Aggregate of 4 catalytic active heterodimers, consisting of a large and a small subunit. It depends on [3Fe-4S] cluster as a cofactor. FAD is required as a cofactor. Requires FMN as cofactor.

It catalyses the reaction 2 L-glutamate + NADP(+) = L-glutamine + 2-oxoglutarate + NADPH + H(+). It functions in the pathway amino-acid biosynthesis; L-glutamate biosynthesis via GLT pathway; L-glutamate from 2-oxoglutarate and L-glutamine (NADP(+) route): step 1/1. It participates in energy metabolism; nitrogen metabolism. The chain is Glutamate synthase [NADPH] large chain (gltA) from Bacillus subtilis (strain 168).